The sequence spans 306 residues: tRNA dimethylallyltransferase (306 aa).

11–18 (GPTAVGKS) contacts ATP. 13–18 (TAVGKS) contacts substrate. The interval 35 to 38 (DSIQ) is interaction with substrate tRNA.

This sequence belongs to the IPP transferase family. In terms of assembly, monomer. The cofactor is Mg(2+).

It catalyses the reaction adenosine(37) in tRNA + dimethylallyl diphosphate = N(6)-dimethylallyladenosine(37) in tRNA + diphosphate. In terms of biological role, catalyzes the transfer of a dimethylallyl group onto the adenine at position 37 in tRNAs that read codons beginning with uridine, leading to the formation of N6-(dimethylallyl)adenosine (i(6)A). This is tRNA dimethylallyltransferase from Borreliella burgdorferi (strain ZS7) (Borrelia burgdorferi).